The sequence spans 203 residues: 2-phospho-L-lactate guanylyltransferase (203 aa).

Belongs to the CofC family. As to quaternary structure, homodimer.

It carries out the reaction (2S)-2-phospholactate + GTP + H(+) = (2S)-lactyl-2-diphospho-5'-guanosine + diphosphate. Its pathway is cofactor biosynthesis; coenzyme F420 biosynthesis. Guanylyltransferase that catalyzes the activation of (2S)-2-phospholactate (2-PL) as (2S)-lactyl-2-diphospho-5'-guanosine, via the condensation of 2-PL with GTP. It is involved in the biosynthesis of coenzyme F420, a hydride carrier cofactor. The polypeptide is 2-phospho-L-lactate guanylyltransferase (Halomicrobium mukohataei (strain ATCC 700874 / DSM 12286 / JCM 9738 / NCIMB 13541) (Haloarcula mukohataei)).